The chain runs to 359 residues: 24-methylenesterol C-methyltransferase 3 (359 aa).

A helical transmembrane segment spans residues Val-4–Leu-24.

It belongs to the class I-like SAM-binding methyltransferase superfamily. Erg6/SMT family.

The protein localises to the membrane. It catalyses the reaction 24-methylidenelophenol + S-adenosyl-L-methionine = (Z)-24-ethylidenelophenol + S-adenosyl-L-homocysteine + H(+). It functions in the pathway steroid biosynthesis; sterol biosynthesis. Catalyzes the methyl transfer from S-adenosyl-methionine to the methylene group of 24-methylene lophenol to form 24-ethylidene lophenol. This chain is 24-methylenesterol C-methyltransferase 3 (SMT3), found in Arabidopsis thaliana (Mouse-ear cress).